A 477-amino-acid polypeptide reads, in one-letter code: Glycogen synthase (477 aa).

Lys15 serves as a coordination point for ADP-alpha-D-glucose.

Belongs to the glycosyltransferase 1 family. Bacterial/plant glycogen synthase subfamily.

The enzyme catalyses [(1-&gt;4)-alpha-D-glucosyl](n) + ADP-alpha-D-glucose = [(1-&gt;4)-alpha-D-glucosyl](n+1) + ADP + H(+). The protein operates within glycan biosynthesis; glycogen biosynthesis. Functionally, synthesizes alpha-1,4-glucan chains using ADP-glucose. The polypeptide is Glycogen synthase (Streptococcus pneumoniae serotype 2 (strain D39 / NCTC 7466)).